Here is a 302-residue protein sequence, read N- to C-terminus: 33 kDa chaperonin (302 aa).

Cystine bridges form between C240/C242 and C273/C276.

It belongs to the HSP33 family. Post-translationally, under oxidizing conditions two disulfide bonds are formed involving the reactive cysteines. Under reducing conditions zinc is bound to the reactive cysteines and the protein is inactive.

It is found in the cytoplasm. Redox regulated molecular chaperone. Protects both thermally unfolding and oxidatively damaged proteins from irreversible aggregation. Plays an important role in the bacterial defense system toward oxidative stress. This chain is 33 kDa chaperonin, found in Synechocystis sp. (strain ATCC 27184 / PCC 6803 / Kazusa).